The primary structure comprises 92 residues: Small ribosomal subunit protein bS20 (92 aa).

The disordered stretch occupies residues 1–23 (MANTPSAKKRAKQAEKRRSHNAS). Positions 7–20 (AKKRAKQAEKRRSH) are enriched in basic residues.

The protein belongs to the bacterial ribosomal protein bS20 family.

Functionally, binds directly to 16S ribosomal RNA. In Pseudomonas savastanoi pv. phaseolicola (strain 1448A / Race 6) (Pseudomonas syringae pv. phaseolicola (strain 1448A / Race 6)), this protein is Small ribosomal subunit protein bS20.